The following is a 213-amino-acid chain: MKAYQREFIEFALEKEVLKFGEFTLKSGRKSPYFFNAGLFNTGRDLARLGRFYAAALADSGIEYDVLFGPAYKGIPIATTTAVALADHHDTDKPYCFNRKEAKDHGEGGNLVGSALEGRIMLVDDVITAGTAIRESMEIIQANGADLAGVLVAIDRQEKGKGELSAIQEVERDFNCSIISIVSLTDLISFLEEKGDNAEQLEAVKAYRAEFGI.

A 5-phospho-alpha-D-ribose 1-diphosphate-binding site is contributed by Lys-26. 34 to 35 (FF) contributes to the orotate binding site. Residues 72–73 (YK), Arg-99, Lys-100, Lys-103, His-105, and 124–132 (DDVITAGTA) each bind 5-phospho-alpha-D-ribose 1-diphosphate. Residues Thr-128 and Arg-156 each contribute to the orotate site.

This sequence belongs to the purine/pyrimidine phosphoribosyltransferase family. PyrE subfamily. Homodimer. Mg(2+) serves as cofactor.

It catalyses the reaction orotidine 5'-phosphate + diphosphate = orotate + 5-phospho-alpha-D-ribose 1-diphosphate. It participates in pyrimidine metabolism; UMP biosynthesis via de novo pathway; UMP from orotate: step 1/2. In terms of biological role, catalyzes the transfer of a ribosyl phosphate group from 5-phosphoribose 1-diphosphate to orotate, leading to the formation of orotidine monophosphate (OMP). This Aliivibrio fischeri (strain MJ11) (Vibrio fischeri) protein is Orotate phosphoribosyltransferase.